The following is a 64-amino-acid chain: LGVLLTICLLLFPLTAVPLDGDQPADQPAGRMQDDISSEQHPFFDPVKRCCVVCNAGCSGNCCP.

An N-terminal signal peptide occupies residues 1 to 16 (LGVLLTICLLLFPLTA). Residues 17 to 49 (VPLDGDQPADQPAGRMQDDISSEQHPFFDPVKR) constitute a propeptide that is removed on maturation. 3 disulfides stabilise this stretch: Cys-50/Cys-63, Cys-51/Cys-58, and Cys-54/Cys-62.

This sequence belongs to the conotoxin M superfamily. In terms of tissue distribution, expressed by the venom duct.

It localises to the secreted. This is Conotoxin Pu3.5 from Conus pulicarius (Flea-bitten cone).